The primary structure comprises 146 residues: Probable cyclic pyranopterin monophosphate synthase (146 aa).

Substrate-binding positions include Leu66–His68 and Met102–Glu103. Asp117 is a catalytic residue.

It belongs to the MoaC family. Homohexamer; trimer of dimers.

The enzyme catalyses (8S)-3',8-cyclo-7,8-dihydroguanosine 5'-triphosphate = cyclic pyranopterin phosphate + diphosphate. It functions in the pathway cofactor biosynthesis; molybdopterin biosynthesis. Catalyzes the conversion of (8S)-3',8-cyclo-7,8-dihydroguanosine 5'-triphosphate to cyclic pyranopterin monophosphate (cPMP). The polypeptide is Probable cyclic pyranopterin monophosphate synthase (Aeropyrum pernix (strain ATCC 700893 / DSM 11879 / JCM 9820 / NBRC 100138 / K1)).